The following is a 184-amino-acid chain: Shikimate kinase (184 aa).

Glycine 15 to serine 20 serves as a coordination point for ATP. Threonine 19 is a Mg(2+) binding site. Aspartate 37, arginine 61, and glycine 83 together coordinate substrate. Arginine 123 provides a ligand contact to ATP. Arginine 142 is a binding site for substrate.

Belongs to the shikimate kinase family. In terms of assembly, monomer. The cofactor is Mg(2+).

It localises to the cytoplasm. It carries out the reaction shikimate + ATP = 3-phosphoshikimate + ADP + H(+). It participates in metabolic intermediate biosynthesis; chorismate biosynthesis; chorismate from D-erythrose 4-phosphate and phosphoenolpyruvate: step 5/7. Functionally, catalyzes the specific phosphorylation of the 3-hydroxyl group of shikimic acid using ATP as a cosubstrate. This Coxiella burnetii (strain CbuK_Q154) (Coxiella burnetii (strain Q154)) protein is Shikimate kinase.